The primary structure comprises 378 residues: Alcohol dehydrogenase 1 (378 aa).

Residue cysteine 48 participates in Zn(2+) binding. 49-53 (HTDVL) provides a ligand contact to NAD(+). Positions 69, 99, 102, 105, 113, and 177 each coordinate Zn(2+). NAD(+) is bound by residues 202–207 (GIGTVG), aspartate 226, lysine 231, 274–276 (TGV), 297–299 (IGA), and 321–323 (TTF).

Belongs to the zinc-containing alcohol dehydrogenase family. Class-IV subfamily. In terms of assembly, homodimer. Requires Zn(2+) as cofactor. As to expression, expressed in flowers and disk florets.

Its pathway is isoprenoid biosynthesis. The polypeptide is Alcohol dehydrogenase 1 (Tanacetum cinerariifolium (Dalmatian daisy)).